A 696-amino-acid chain; its full sequence is MSAEKLYIEKELSWLSFNERVLQEAADKTVPLIERIRFLGIFSNNLDEFYKVRFADVKRRILINQERGGSDNSKRLLSKMQAKALKLNEQFDELYSELIREMARRRIFLVNEHQLDEAQEKWITKYFRKEVMPHITPLLMKDEIDVLQFLKDEYAYIAVELRKEDHSQYALIEIPTDHLPRFVMVPEQKGKRRKTIILLDNIIRYCLDELFKGFFDYDELAGYAMKMTRDAEYDLRNEIEYSLLEQMSAGVNQRLTAMPVRFVYEREMPQEMLDFLCSKLRISNYDNLIPGGRYHNFKDFIAFPNVGREYLENKPMPPMKCADFEGYANSFEAIKAKDILLYYPYHTFDHIGELVRQASFDPKVLSIKINIYRVAKDSRLMNSLIDAVHNGKNVTVVVELQARFDEEANIEWSKVLTEAGVHVIFGAPGLKIHSKLLMISRREGDDIIRYAHIGTGNFHEKTARIYTDFSLLTADQEITNEVRNVFGYIENPYRPVKFNHLMVSPRNSRTQIYRLIDNEIANAKAGKKAGLTIKVNNLVDKGIVTRLYAASNAGVKINMIIRGMCALVPGIEGVSENIRIISIVDRFLEHPRVVITHNDGDPQVYISSADWMTRNIDHRIEVAAPVRDPRLKQRIIDITNIHFTDTVKARLIDKEMSNSYVPRGNRKKVRSQVAIYDYLKNIEKQTRRQKSDVSDT.

Asn45 serves as a coordination point for ATP. Residues Arg373 and Arg403 each coordinate Mg(2+). Positions 428 to 462 (PGLKIHSKLLMISRREGDDIIRYAHIGTGNFHEKT) constitute a PLD phosphodiesterase domain. Catalysis depends on His433, which acts as the Phosphohistidine intermediate. ATP contacts are provided by Tyr466, Arg562, and His590.

Belongs to the polyphosphate kinase 1 (PPK1) family. It depends on Mg(2+) as a cofactor. An intermediate of this reaction is the autophosphorylated ppk in which a phosphate is covalently linked to a histidine residue through a N-P bond.

The enzyme catalyses [phosphate](n) + ATP = [phosphate](n+1) + ADP. Its function is as follows. Catalyzes the reversible transfer of the terminal phosphate of ATP to form a long-chain polyphosphate (polyP). The polypeptide is Polyphosphate kinase (Vibrio parahaemolyticus serotype O3:K6 (strain RIMD 2210633)).